Here is a 527-residue protein sequence, read N- to C-terminus: Glutamate--cysteine ligase (527 aa).

Belongs to the glutamate--cysteine ligase type 1 family. Type 1 subfamily.

It carries out the reaction L-cysteine + L-glutamate + ATP = gamma-L-glutamyl-L-cysteine + ADP + phosphate + H(+). It participates in sulfur metabolism; glutathione biosynthesis; glutathione from L-cysteine and L-glutamate: step 1/2. This is Glutamate--cysteine ligase from Pseudomonas paraeruginosa (strain DSM 24068 / PA7) (Pseudomonas aeruginosa (strain PA7)).